The primary structure comprises 39 residues: Cytochrome b559 subunit beta (39 aa).

A helical membrane pass occupies residues 14-30 (WLAVHGLAVPTVSFLGS). H18 is a binding site for heme.

Belongs to the PsbE/PsbF family. As to quaternary structure, heterodimer of an alpha subunit and a beta subunit. PSII is composed of 1 copy each of membrane proteins PsbA, PsbB, PsbC, PsbD, PsbE, PsbF, PsbH, PsbI, PsbJ, PsbK, PsbL, PsbM, PsbT, PsbX, PsbY, PsbZ, Psb30/Ycf12, at least 3 peripheral proteins of the oxygen-evolving complex and a large number of cofactors. It forms dimeric complexes. The cofactor is heme b.

Its subcellular location is the plastid. The protein localises to the chloroplast thylakoid membrane. This b-type cytochrome is tightly associated with the reaction center of photosystem II (PSII). PSII is a light-driven water:plastoquinone oxidoreductase that uses light energy to abstract electrons from H(2)O, generating O(2) and a proton gradient subsequently used for ATP formation. It consists of a core antenna complex that captures photons, and an electron transfer chain that converts photonic excitation into a charge separation. This is Cytochrome b559 subunit beta from Muilla maritima (Sea muilla).